Consider the following 1582-residue polypeptide: SET-binding protein (1582 aa).

Disordered stretches follow at residues 1 to 76 (MEPR…WVAG), 124 to 246 (ITIK…KVPA), 278 to 416 (LLGS…KRQS), and 446 to 513 (SNSE…KLSE). The span at 18 to 27 (EFLQGSSSRS) shows a compositional bias: polar residues. Basic and acidic residues predominate over residues 57 to 74 (GSGRDVDCNSNADSEKWV). Polar residues-rich tracts occupy residues 126–141 (IKQS…GKNS) and 213–229 (MEWS…QNCF). Over residues 278 to 298 (LLGSVVPSPSSHNSPATPSSS) the composition is skewed to low complexity. Residues 356–365 (ETTEGKREAY) are compositionally biased toward basic and acidic residues. Over residues 368–388 (DSAQEASPARQSISSVSNPEN) the composition is skewed to polar residues. Residues 450 to 465 (GSKKDPRVPKLGKMIE) show a composition bias toward basic and acidic residues. Positions 575–587 (KKKRGRPKKQPLL) form a DNA-binding region, a.T hook 1. Disordered stretches follow at residues 595–617 (GTST…RKRR) and 709–787 (RGTI…ASTE). Positions 770-787 (LSTQLGGSNGNLSPASTE) are enriched in polar residues. K808 bears the N6-acetyllysine mark. The segment covering 845 to 871 (SPVSESHSEETIPSDSGIGTDNNSTSD) has biased composition (polar residues). Residues 845-880 (SPVSESHSEETIPSDSGIGTDNNSTSDQAEKSSESR) are disordered. The segment at residues 1007 to 1019 (KKKRGRPAKTNDT) is a DNA-binding region (a.T hook 2). Disordered stretches follow at residues 1128–1155 (VGGA…DRIL), 1182–1215 (SGSD…VSKN), 1236–1265 (AKDK…TRSE), 1429–1461 (QRQS…RDQM), 1470–1489 (LPSK…EPAS), and 1507–1582 (EAPP…DVLP). Positions 1137 to 1150 (RLHKRKHKHKRKHK) are enriched in basic residues. Residues 1182–1196 (SGSDKELPLVSEKSK) are compositionally biased toward basic and acidic residues. The segment covering 1439–1448 (VKKRRGRPRK) has biased composition (basic residues). The a.T hook 3 DNA-binding region spans 1440–1452 (KKRRGRPRKQPSQ). Pro residues-rich tracts occupy residues 1509-1533 (PPLP…PPLP) and 1546-1559 (QPPA…PQPL).

In terms of assembly, interacts with SET.

The protein localises to the nucleus. The polypeptide is SET-binding protein (Setbp1) (Mus musculus (Mouse)).